The sequence spans 196 residues: MAAPGPGEYFSVGSHVSCLTCLGQRLQGEVVAFDYPSKMLTLKCAPSSGKPNLSDVMLVNLAYVSEVDIITDRAETPPPLASLNFNKLVNRARAEKEDKLSLAYAVSAGVSVEGQQLFQTIHKTIKECKWQEKNIIVMDDVVISPPYQVDNCKGKEGSALSHVRKIVEKHFRDVESQISVQHSQQAQHTQDSALSS.

Positions 3–70 (APGPGEYFSV…LAYVSEVDII (68 aa)) constitute a Sm domain. Residues 81–175 (ASLNFNKLVN…IVEKHFRDVE (95 aa)) enclose the AD domain.

The protein belongs to the LSM12 family.

In Danio rerio (Zebrafish), this protein is Protein LSM12 homolog B (lsm12b).